Reading from the N-terminus, the 227-residue chain is Transmembrane emp24 domain-containing protein 1 (227 aa).

Residues 1-23 (MMAAGAALALALWLLMPPVGVGG) form the signal peptide. Topologically, residues 24–194 (AGPPPIQDGE…LQEGNLERVN (171 aa)) are extracellular. Residues 43–125 (KQCFYQSAPA…EKLVFFELIF (83 aa)) enclose the GOLD domain. Residues 145–170 (EMLDVKMEDIKESIETMRTRLERSIQ) adopt a coiled-coil conformation. The helical transmembrane segment at 195 to 215 (FWSAVNVAVLLLVAVLQVCTL) threads the bilayer. The Cytoplasmic portion of the chain corresponds to 216-227 (KRFFQDKRPVPT). Residues 218 to 219 (FF) carry the COPII vesicle coat-binding motif. Residues 218–227 (FFQDKRPVPT) carry the COPI vesicle coat-binding motif.

The protein belongs to the EMP24/GP25L family. Homodimer in endoplasmic reticulum, endoplasmic reticulum-Golgi intermediate compartment and cis-Golgi network. Interacts with IL1RL1. Interacts with RNF26; this interaction is important to modulate innate immune signaling through the cGAS-STING pathway.

The protein localises to the cell membrane. It localises to the endoplasmic reticulum membrane. The protein resides in the golgi apparatus. Its subcellular location is the cis-Golgi network membrane. It is found in the endoplasmic reticulum-Golgi intermediate compartment membrane. In terms of biological role, potential role in vesicular protein trafficking, mainly in the early secretory pathway. May act as a cargo receptor at the lumenal side for incorporation of secretory cargo molecules into transport vesicles and may be involved in vesicle coat formation at the cytoplasmic side. Plays a positive role in IL-33-mediated IL-8 and IL-6 production by interacting with interleukin-33 receptor IL1RL1. Plays also a role in the modulation of innate immune signaling through the cGAS-STING pathway by interacting with RNF26. This Pongo abelii (Sumatran orangutan) protein is Transmembrane emp24 domain-containing protein 1 (TMED1).